Here is a 282-residue protein sequence, read N- to C-terminus: Nucleotide-binding protein Shew_3314 (282 aa).

Residue 8–15 (GRSGSGKS) coordinates ATP. 56-59 (DVRN) is a GTP binding site.

The protein belongs to the RapZ-like family.

Functionally, displays ATPase and GTPase activities. This is Nucleotide-binding protein Shew_3314 from Shewanella loihica (strain ATCC BAA-1088 / PV-4).